A 454-amino-acid polypeptide reads, in one-letter code: MSEPEFQQAYDEVVSSLEDSTLFEQHPKYRKVLPIVSVPERIIQFRVTWENDKGEQEVAQGYRVQYNSAKGPYKGGLRFHPSVNLSILKFLGFEQIFKNSLTGLDMGGGKGGLCVDLKGRSNNEIRRICYAFMRELSRHIGQDTDVPAGDIGVGGREIGYLFGAYRTYKNSWEGVLTGKGLNWGGSLIRPEATGYGLVYYTQAMIDYATNGKESFEGKRVTISGSGNVAQFAALKVIELGGTVVSLSDSKGCIISETGITSEQVADISSAKVNFKSLEQIVGEYSTFTENKVQYISGARPWTHVQKVDIALPCATQNEVSGDEAKALVAQGVKFVAEGSNMGSTPEAIAVFETARATASTLKESVWYGPPKAANLGGVAVSGLEMAQNSQRITWSSERVDQELKKIMVNCFNECIDSAKKYTKEGNALPSLVKGANIASFIKVSDAMFDQGDVF.

Lys110 is a catalytic residue. Position 174 to 203 (174 to 203) interacts with NAD(+); the sequence is GVLTGKGLNWGGSLIRPEATGYGLVYYTQA.

Belongs to the Glu/Leu/Phe/Val dehydrogenases family. As to quaternary structure, homohexamer.

It carries out the reaction L-glutamate + NADP(+) + H2O = 2-oxoglutarate + NH4(+) + NADPH + H(+). This chain is NADP-specific glutamate dehydrogenase 1 (GDH1), found in Saccharomyces uvarum (strain ATCC 76518 / CBS 7001 / CLIB 283 / NBRC 10550 / MCYC 623 / NCYC 2669 / NRRL Y-11845) (Yeast).